The primary structure comprises 106 residues: Large ribosomal subunit protein eL42 (106 aa).

The tract at residues 34–53 is disordered; it reads YAQGRRRYDRKRSGYGGQTK. K53 is subject to N6-methyllysine.

The protein belongs to the eukaryotic ribosomal protein eL42 family.

Its subcellular location is the cytoplasm. This Pongo abelii (Sumatran orangutan) protein is Large ribosomal subunit protein eL42 (RPL36AL).